The chain runs to 148 residues: uncharacterized protein (148 aa).

The 62-residue stretch at 3-64 folds into the HTH asnC-type domain; that stretch reads IDDLDRKILS…KLNYEKLGYE (62 aa). The segment at residues 22–41 is a DNA-binding region (H-T-H motif); it reads YREIAKKLNVAVGTIYNRIK.

This is an uncharacterized protein from Pyrococcus furiosus (strain ATCC 43587 / DSM 3638 / JCM 8422 / Vc1).